Reading from the N-terminus, the 122-residue chain is Large ribosomal subunit protein uL14 (122 aa).

It belongs to the universal ribosomal protein uL14 family. Part of the 50S ribosomal subunit. Forms a cluster with proteins L3 and L19. In the 70S ribosome, L14 and L19 interact and together make contacts with the 16S rRNA in bridges B5 and B8.

Its function is as follows. Binds to 23S rRNA. Forms part of two intersubunit bridges in the 70S ribosome. This Treponema denticola (strain ATCC 35405 / DSM 14222 / CIP 103919 / JCM 8153 / KCTC 15104) protein is Large ribosomal subunit protein uL14.